Consider the following 124-residue polypeptide: Darcynin homolog (124 aa).

The protein belongs to the darcynin family.

This chain is Darcynin homolog, found in Granulibacter bethesdensis (strain ATCC BAA-1260 / CGDNIH1).